Consider the following 1370-residue polypeptide: DNA-directed RNA polymerase subunit beta (1370 aa).

Belongs to the RNA polymerase beta chain family. In terms of assembly, the RNAP catalytic core consists of 2 alpha, 1 beta, 1 beta' and 1 omega subunit. When a sigma factor is associated with the core the holoenzyme is formed, which can initiate transcription.

The catalysed reaction is RNA(n) + a ribonucleoside 5'-triphosphate = RNA(n+1) + diphosphate. Functionally, DNA-dependent RNA polymerase catalyzes the transcription of DNA into RNA using the four ribonucleoside triphosphates as substrates. The polypeptide is DNA-directed RNA polymerase subunit beta (Bordetella avium (strain 197N)).